A 201-amino-acid polypeptide reads, in one-letter code: Small ribosomal subunit protein uS4c (201 aa).

The interval 15–43 (LGALPGLTSKRPRPGSDLRNQSRSGKRSQ) is disordered. Positions 89–150 (MRLDNILFRL…EQRSRALIQN (62 aa)) constitute an S4 RNA-binding domain.

Belongs to the universal ribosomal protein uS4 family. As to quaternary structure, part of the 30S ribosomal subunit. Contacts protein S5. The interaction surface between S4 and S5 is involved in control of translational fidelity.

Its subcellular location is the plastid. The protein resides in the chloroplast. One of the primary rRNA binding proteins, it binds directly to 16S rRNA where it nucleates assembly of the body of the 30S subunit. In terms of biological role, with S5 and S12 plays an important role in translational accuracy. The chain is Small ribosomal subunit protein uS4c (rps4) from Liriodendron tulipifera (Tuliptree).